Here is a 236-residue protein sequence, read N- to C-terminus: Endo-1,4-beta-xylanase 3 (236 aa).

The first 45 residues, 1-45, serve as a signal peptide directing secretion; that stretch reads MQILTWALAALAAIPAVTAAPVETVEASSMDELVERSPNVTLVAR. N-linked (GlcNAc...) asparagine glycosylation is found at Asn39 and Asn106. The 191-residue stretch at 46–236 folds into the GH11 domain; that stretch reads GTPSSTGTHN…SSGSASMTVR (191 aa). Glu131 acts as the Nucleophile in catalysis. Glu223 (proton donor) is an active-site residue.

It belongs to the glycosyl hydrolase 11 (cellulase G) family.

The protein localises to the secreted. The catalysed reaction is Endohydrolysis of (1-&gt;4)-beta-D-xylosidic linkages in xylans.. It functions in the pathway glycan degradation; xylan degradation. In terms of biological role, endo-1,4-beta-xylanase involved in the hydrolysis of xylan, a major structural heterogeneous polysaccharide found in plant biomass representing the second most abundant polysaccharide in the biosphere, after cellulose. This Pyricularia grisea (Crabgrass-specific blast fungus) protein is Endo-1,4-beta-xylanase 3 (XYL3).